A 76-amino-acid chain; its full sequence is Adropin (76 aa).

The N-terminal stretch at Met-1–Ala-33 is a signal peptide. A disordered region spans residues Ile-41–Pro-76. Residues Ser-52–Lys-65 are compositionally biased toward pro residues.

It localises to the secreted. In terms of biological role, involved in the regulation of glucose homeostasis and lipid metabolism. This chain is Adropin (ENHO), found in Bos taurus (Bovine).